Here is a 273-residue protein sequence, read N- to C-terminus: SET domain-containing protein 9 (273 aa).

Residues 96–269 (FSVAQATSSL…QGEELFSNYY (174 aa)) form the SET domain. Position 268 (tyrosine 268) interacts with S-adenosyl-L-methionine.

Belongs to the class V-like SAM-binding methyltransferase superfamily.

This is SET domain-containing protein 9 (SETD9) from Pongo abelii (Sumatran orangutan).